Consider the following 257-residue polypeptide: Thiazole synthase (257 aa).

The Schiff-base intermediate with DXP role is filled by Lys-95. 1-deoxy-D-xylulose 5-phosphate-binding positions include Gly-156, 182 to 183 (AG), and 204 to 205 (NT).

This sequence belongs to the ThiG family. Homotetramer. Forms heterodimers with either ThiH or ThiS.

The protein resides in the cytoplasm. It catalyses the reaction [ThiS sulfur-carrier protein]-C-terminal-Gly-aminoethanethioate + 2-iminoacetate + 1-deoxy-D-xylulose 5-phosphate = [ThiS sulfur-carrier protein]-C-terminal Gly-Gly + 2-[(2R,5Z)-2-carboxy-4-methylthiazol-5(2H)-ylidene]ethyl phosphate + 2 H2O + H(+). It participates in cofactor biosynthesis; thiamine diphosphate biosynthesis. In terms of biological role, catalyzes the rearrangement of 1-deoxy-D-xylulose 5-phosphate (DXP) to produce the thiazole phosphate moiety of thiamine. Sulfur is provided by the thiocarboxylate moiety of the carrier protein ThiS. In vitro, sulfur can be provided by H(2)S. In Fusobacterium nucleatum subsp. nucleatum (strain ATCC 25586 / DSM 15643 / BCRC 10681 / CIP 101130 / JCM 8532 / KCTC 2640 / LMG 13131 / VPI 4355), this protein is Thiazole synthase.